Reading from the N-terminus, the 320-residue chain is MRQTKTGILLANLGTPDAPTPEAVKRYLKQFLSDRRVVDTPRLLWWPLLRGVILPLRSPRVAKLYQSIWMDGGSPLMVYSREQQQALAARLPDTPVALGMSYGSPSLESAVDELLASDVDHIVVLPLYPQYSCSTVGAVWDELGRILARKRRIPGISFIRDYADDGAYIDALAKSARESFARHGEPDVLLLSYHGIPQRYADEGDDYPQRCRDTTRELVSALGLPPEKVMMTFQSRFGREPWLTPYTDETLKMLGEKGTGHIQVMCPGFAADCLETLEEIAEQNREIFLEAGGKKYAYIPALNATPEHIDMMLKLTAPYR.

Fe cation contacts are provided by histidine 194 and glutamate 275.

This sequence belongs to the ferrochelatase family. In terms of assembly, monomer.

The protein localises to the cytoplasm. The catalysed reaction is heme b + 2 H(+) = protoporphyrin IX + Fe(2+). It functions in the pathway porphyrin-containing compound metabolism; protoheme biosynthesis; protoheme from protoporphyrin-IX: step 1/1. In terms of biological role, catalyzes the ferrous insertion into protoporphyrin IX. This is Ferrochelatase from Salmonella agona (strain SL483).